We begin with the raw amino-acid sequence, 137 residues long: Large ribosomal subunit protein uL16 (137 aa).

It belongs to the universal ribosomal protein uL16 family. In terms of assembly, part of the 50S ribosomal subunit.

Binds 23S rRNA and is also seen to make contacts with the A and possibly P site tRNAs. The chain is Large ribosomal subunit protein uL16 from Azorhizobium caulinodans (strain ATCC 43989 / DSM 5975 / JCM 20966 / LMG 6465 / NBRC 14845 / NCIMB 13405 / ORS 571).